A 2133-amino-acid polypeptide reads, in one-letter code: Coagulation factor VIII (2133 aa).

The signal sequence occupies residues 1-19 (MQLELSTCVFLCLLPLGFS). Plastocyanin-like domains follow at residues 20 to 199 (AIRR…LLVC), 207 to 357 (ERTQ…QLRR), 399 to 573 (KTWV…LLIC), and 583 to 730 (NQMM…VYSC). F5/8 type A domains follow at residues 20 to 357 (AIRR…QLRR) and 399 to 730 (KTWV…VYSC). A disulfide bridge connects residues Cys173 and Cys199. N-linked (GlcNAc...) asparagine glycans are attached at residues Asn233 and Asn259. Cysteines 547 and 573 form a disulfide. Asn601 carries an N-linked (GlcNAc...) asparagine glycan. Sulfotyrosine occurs at positions 737, 738, and 742. 2 disordered regions span residues 760 to 790 (SFAQ…LDPQ) and 804 to 914 (PSGD…PHPQ). The interval 760–1599 (SFAQNSRPPS…LISYPDDQEQ (840 aa)) is b. A compositionally biased stretch (polar residues) spans 761–780 (FAQNSRPPSASQKQFQTITS). Basic and acidic residues-rich tracts occupy residues 853 to 862 (LRPELHHSAE) and 868 to 878 (EPEKELKKLDS). A compositionally biased stretch (low complexity) spans 879 to 888 (KMSSSSDLLK). Residues 889 to 900 (TSPTIPSDTLSA) are compositionally biased toward polar residues. Residues Asn929, Asn985, and Asn1025 are each glycosylated (N-linked (GlcNAc...) asparagine). The disordered stretch occupies residues 1042-1078 (LGKNPLSSERGPSPELLTSSGSGKSVKGQSSGQGRIR). Positions 1060 to 1075 (SSGSGKSVKGQSSGQG) are enriched in low complexity. An N-linked (GlcNAc...) asparagine glycan is attached at Asn1111. A disordered region spans residues 1160–1179 (PSVEGFDGGSHAPVPQDSRS). N-linked (GlcNAc...) asparagine glycans are attached at residues Asn1181, Asn1208, Asn1245, Asn1265, and Asn1335. Positions 1200 to 1221 (EAPLEAPGNRTGPGPRSAVPRR) are disordered. 2 disordered regions span residues 1358–1391 (LNKV…KSTA) and 1406–1441 (ESNH…APKP). The span at 1378-1387 (KEWESLEKSP) shows a compositional bias: basic and acidic residues. Residues Asn1408 and Asn1611 are each glycosylated (N-linked (GlcNAc...) asparagine). Plastocyanin-like domains are found at residues 1495–1659 (RTRH…LLIC) and 1669–1822 (GRQV…SKEC). The F5/8 type A 3 domain maps to 1495–1822 (RTRHYFIAAV…TTFLVYSKEC (328 aa)). Intrachain disulfides connect Cys1633–Cys1659, Cys1822–Cys1970, and Cys1975–Cys2127. F5/8 type C domains are found at residues 1822 to 1970 (CQAP…LMGC) and 1975 to 2127 (CSMP…VLGC). The N-linked (GlcNAc...) asparagine glycan is linked to Asn1919.

The protein belongs to the multicopper oxidase family. Interacts with vWF. vWF binding is essential for the stabilization of F8 in circulation. In terms of processing, proteolytically cleaved by cathepsin CTSG to produce a partially activated form.

The protein localises to the secreted. Its subcellular location is the extracellular space. Functionally, factor VIII, along with calcium and phospholipid, acts as a cofactor for factor IXa when it converts factor X to the activated form, factor Xa. In Sus scrofa (Pig), this protein is Coagulation factor VIII (F8).